Consider the following 804-residue polypeptide: SH3-containing GRB2-like protein 3-interacting protein 1 (804 aa).

Disordered regions lie at residues 1 to 90 (MMEG…EESH), 124 to 181 (LSPS…GPPL), and 199 to 254 (IWGS…QSAT). Basic and acidic residues predominate over residues 16-34 (RKKEKDTDSTGSPDRDGIK). 8 positions are modified to phosphoserine: Ser54, Ser80, Ser81, Ser83, Ser125, Ser127, Ser132, and Ser145. Residues Thr156 and Thr158 each carry the phosphothreonine modification. A Phosphoserine modification is found at Ser212. The segment covering 221 to 236 (TGTPPPLPPKNVPATP) has biased composition (pro residues). 2 positions are modified to phosphothreonine: Thr223 and Thr235. Ser241, Ser263, Ser276, Ser292, and Ser295 each carry phosphoserine. A compositionally biased stretch (basic and acidic residues) spans 289 to 309 (VHFSDTSPEHVTPELTPREKV). The disordered stretch occupies residues 289 to 500 (VHFSDTSPEH…LSAATTPTVE (212 aa)). 2 positions are modified to phosphothreonine: Thr300 and Thr304. Residues 322–346 (SPAPGPLGPPGPTGPPGPPGPPRNV) show a composition bias toward pro residues. The residue at position 348 (Ser348) is a Phosphoserine. A compositionally biased stretch (basic and acidic residues) spans 354–369 (EVQKKVAEQTFIKDDY). Phosphoserine is present on Ser375. The residue at position 386 (Thr386) is a Phosphothreonine. Low complexity predominate over residues 413–432 (TSGASSPARPATPLLPCSST). Residues 433 to 451 (TPPPPPPRPPSRPKLPPGK) show a composition bias toward pro residues. 2 stretches are compositionally biased toward low complexity: residues 458-468 (SRPFSPPIHSS) and 475-498 (PLAR…TTPT). Ser462 carries the phosphoserine modification. An MHD domain is found at 535–803 (TLPVAAAFTE…RFAAGKYLAD (269 aa)). Interaction with DPF motifs-containing proteins stretches follow at residues 537–543 (PVAAAFT), 569–571 (SFP), 643–646 (TYYN), and 789–794 (SLIKKR). A necessary and sufficient to mediate interaction with CANX region spans residues 625–804 (MPNLMTHLKK…FAAGKYLADN (180 aa)).

Interacts with proteins essential or regulating the formation of functional clathrin-coated pits. Interacts with CANX. Interacts with AP2A1. Interacts with EPS15. Interacts with SH3GL3. Interacts with AMPH. Interacts with ITSN1 (via SH3 domains). Interacts with and REPS1.

Its subcellular location is the membrane. The protein resides in the clathrin-coated pit. In terms of biological role, may function in clathrin-mediated endocytosis. Has both a membrane binding/tubulating activity and the ability to recruit proteins essential to the formation of functional clathrin-coated pits. Has a preference for membranes enriched in phosphatidylserine and phosphoinositides and is required for the endocytosis of the transferrin receptor. May also bind tubulin. May play a role in the regulation of energy homeostasis. The polypeptide is SH3-containing GRB2-like protein 3-interacting protein 1 (SGIP1) (Pongo abelii (Sumatran orangutan)).